Reading from the N-terminus, the 306-residue chain is Probable cobalamin biosynthesis protein CobD (306 aa).

A run of 5 helical transmembrane segments spans residues 54 to 74 (LFGF…TYEI), 88 to 108 (ISIY…IEFS), 155 to 175 (ITDS…PGAF), 215 to 235 (IAGM…KSAI), and 286 to 306 (SLKA…VLLM).

Belongs to the CobD/CbiB family.

It is found in the cell membrane. It participates in cofactor biosynthesis; adenosylcobalamin biosynthesis. In terms of biological role, converts cobyric acid to cobinamide by the addition of aminopropanol on the F carboxylic group. This is Probable cobalamin biosynthesis protein CobD from Methanococcus maripaludis (strain C7 / ATCC BAA-1331).